The following is a 119-amino-acid chain: Large ribosomal subunit protein bL20 (119 aa).

The protein belongs to the bacterial ribosomal protein bL20 family.

In terms of biological role, binds directly to 23S ribosomal RNA and is necessary for the in vitro assembly process of the 50S ribosomal subunit. It is not involved in the protein synthesizing functions of that subunit. This Bordetella avium (strain 197N) protein is Large ribosomal subunit protein bL20.